Here is a 462-residue protein sequence, read N- to C-terminus: MDKKQLLRNLPKIDELLKEEIVNRYLQENSRTLVVDSLRQSIDHYRGEILKNNIDSFTKENVVNYFIDTLEENKSTKFKKVINATGVVIHTNLGRSLLAKEAIENVVKISENYSNLEYDLKEGKRGSRYSHVEELIKKVTGAEAAMVVNNNAAAVMLALNTLCEEREAIVSRGQLVEIGGSFRVPDVMKFSRAHLVEVGTTNRTHLYDYENNINENTGVLLKVHTSNFKIMGFTEEVSSEEMVQLGGKYKLPVMEDIGSGTLVDFSKYGFTYEPTVQSSLEKGVDVVTFSGDKMLGGPQAGIIVGKKKYIDKMKKNQLTRALRIDKMTLAALEGTLKCYIDEKEAIENIPTLNMILSSKDIHKKRAQRLKRRLQNNVKDFNFKVSEDLSMVGGGSMPGERIPTYVVKVNSDKITAEKIEEKLRLSKNPIIVRVSKDEVILDVRTLFERDFNIIVEEFKKLLK.

An N6-(pyridoxal phosphate)lysine modification is found at Lys293.

It belongs to the SelA family. The cofactor is pyridoxal 5'-phosphate.

Its subcellular location is the cytoplasm. The enzyme catalyses L-seryl-tRNA(Sec) + selenophosphate + H(+) = L-selenocysteinyl-tRNA(Sec) + phosphate. It participates in aminoacyl-tRNA biosynthesis; selenocysteinyl-tRNA(Sec) biosynthesis; selenocysteinyl-tRNA(Sec) from L-seryl-tRNA(Sec) (bacterial route): step 1/1. Its function is as follows. Converts seryl-tRNA(Sec) to selenocysteinyl-tRNA(Sec) required for selenoprotein biosynthesis. The chain is L-seryl-tRNA(Sec) selenium transferase from Clostridium botulinum (strain Langeland / NCTC 10281 / Type F).